A 121-amino-acid chain; its full sequence is UPF0738 protein RBAM_011600 (121 aa).

It belongs to the UPF0738 family.

This is UPF0738 protein RBAM_011600 from Bacillus velezensis (strain DSM 23117 / BGSC 10A6 / LMG 26770 / FZB42) (Bacillus amyloliquefaciens subsp. plantarum).